The sequence spans 128 residues: uncharacterized protein (128 aa).

This is an uncharacterized protein from Caenorhabditis elegans.